The primary structure comprises 158 residues: COP9 signalosome complex subunit 9 (158 aa).

The PCI domain occupies 5-119; sequence LLRNLIEDKT…SVARRATVLE (115 aa).

In terms of assembly, component of a COP9 signalosome-like (CSN) complex.

It is found in the cytoplasm. The protein localises to the nucleus. Component of the COP9 signalosome (CSN) complex that acts as a regulator of the ubiquitin (Ubl) conjugation pathway by mediating the deneddylation of the cullin subunit of SCF-type E3 ubiquitin-protein ligase complexes. The complex is involved in the regulation of the mating pheromone response. This Kluyveromyces lactis (strain ATCC 8585 / CBS 2359 / DSM 70799 / NBRC 1267 / NRRL Y-1140 / WM37) (Yeast) protein is COP9 signalosome complex subunit 9 (CSN9).